Consider the following 281-residue polypeptide: Sulfur carrier protein FdhD (281 aa).

C117 functions as the Cysteine persulfide intermediate in the catalytic mechanism.

Belongs to the FdhD family.

Its subcellular location is the cytoplasm. Required for formate dehydrogenase (FDH) activity. Acts as a sulfur carrier protein that transfers sulfur from IscS to the molybdenum cofactor prior to its insertion into FDH. The polypeptide is Sulfur carrier protein FdhD (Xanthomonas campestris pv. campestris (strain 8004)).